Reading from the N-terminus, the 104-residue chain is MAKFDPRNLPDLVRRPILTEKATIMMEQDKYTFEVTPKATKPQIRAAIEDLFQVKVVKVNTALPPRRKKRVGKFIGFKPQYKKAIVTIAPGDVEKIRQVLFPEV.

This sequence belongs to the universal ribosomal protein uL23 family. As to quaternary structure, part of the 50S ribosomal subunit. Contacts protein L29, and trigger factor when it is bound to the ribosome.

One of the early assembly proteins it binds 23S rRNA. One of the proteins that surrounds the polypeptide exit tunnel on the outside of the ribosome. Forms the main docking site for trigger factor binding to the ribosome. This chain is Large ribosomal subunit protein uL23, found in Trichormus variabilis (strain ATCC 29413 / PCC 7937) (Anabaena variabilis).